Reading from the N-terminus, the 492-residue chain is N-succinylglutamate 5-semialdehyde dehydrogenase (492 aa).

An NAD(+)-binding site is contributed by 220–225 (GSANTG). Catalysis depends on residues Glu-243 and Cys-277.

It belongs to the aldehyde dehydrogenase family. AstD subfamily.

It carries out the reaction N-succinyl-L-glutamate 5-semialdehyde + NAD(+) + H2O = N-succinyl-L-glutamate + NADH + 2 H(+). It participates in amino-acid degradation; L-arginine degradation via AST pathway; L-glutamate and succinate from L-arginine: step 4/5. Catalyzes the NAD-dependent reduction of succinylglutamate semialdehyde into succinylglutamate. The sequence is that of N-succinylglutamate 5-semialdehyde dehydrogenase from Shigella flexneri serotype 5b (strain 8401).